Here is a 460-residue protein sequence, read N- to C-terminus: Homocitrate synthase (460 aa).

Residues 3-258 form the Pyruvate carboxyltransferase domain; sequence VGILDSTLRE…IEVVKLNKLQ (256 aa). Residue Arg-11 participates in 2-oxoglutarate binding. A Mg(2+)-binding site is contributed by Glu-12. 2-oxoglutarate contacts are provided by His-75, Arg-135, and Thr-169. Residues His-197 and His-199 each contribute to the Mg(2+) site. The active-site Proton acceptor is the His-291.

This sequence belongs to the alpha-IPM synthase/homocitrate synthase family. Homocitrate synthase LYS20/LYS21 subfamily. In terms of assembly, forms a homotetramer in the absence of lysine, and is in hexadecamer-octamer equilibrium in the presence of lysine. Mg(2+) serves as cofactor. Requires Mn(2+) as cofactor.

It catalyses the reaction acetyl-CoA + 2-oxoglutarate + H2O = (2R)-homocitrate + CoA + H(+). It participates in amino-acid biosynthesis; L-lysine biosynthesis via AAA pathway; L-alpha-aminoadipate from 2-oxoglutarate: step 1/5. Inhibited by lysine. Its function is as follows. Catalyzes the aldol-type condensation of 2-oxoglutarate with acetyl-CoA to yield homocitrate. Carries out the first step of the alpha-aminoadipate (AAA) lysine biosynthesis pathway. This Sulfurisphaera tokodaii (strain DSM 16993 / JCM 10545 / NBRC 100140 / 7) (Sulfolobus tokodaii) protein is Homocitrate synthase.